Consider the following 333-residue polypeptide: Pantothenate synthetase (333 aa).

Position 27–34 (27–34 (MGALHEGH)) interacts with ATP. His34 serves as the catalytic Proton donor. Gln61 is a (R)-pantoate binding site. A beta-alanine-binding site is contributed by Gln61. 148–151 (GQKD) contributes to the ATP binding site. Position 154 (Gln154) interacts with (R)-pantoate. Residues Val177 and 185-188 (LSSR) each bind ATP.

Belongs to the pantothenate synthetase family. Homodimer.

The protein resides in the cytoplasm. It carries out the reaction (R)-pantoate + beta-alanine + ATP = (R)-pantothenate + AMP + diphosphate + H(+). The protein operates within cofactor biosynthesis; (R)-pantothenate biosynthesis; (R)-pantothenate from (R)-pantoate and beta-alanine: step 1/1. In terms of biological role, catalyzes the condensation of pantoate with beta-alanine in an ATP-dependent reaction via a pantoyl-adenylate intermediate. The chain is Pantothenate synthetase from Streptomyces avermitilis (strain ATCC 31267 / DSM 46492 / JCM 5070 / NBRC 14893 / NCIMB 12804 / NRRL 8165 / MA-4680).